A 381-amino-acid polypeptide reads, in one-letter code: 1-deoxy-D-xylulose 5-phosphate reductoisomerase (381 aa).

Positions 10, 11, 12, 13, 36, 37, 38, and 120 each coordinate NADPH. Lys121 contributes to the 1-deoxy-D-xylulose 5-phosphate binding site. An NADPH-binding site is contributed by Glu122. Asp146 provides a ligand contact to Mn(2+). 1-deoxy-D-xylulose 5-phosphate is bound by residues Ser147, Glu148, Ser172, and His195. Mn(2+) is bound at residue Glu148. Gly201 is an NADPH binding site. Residues Ser208, Asn213, Lys214, and Glu217 each contribute to the 1-deoxy-D-xylulose 5-phosphate site. Mn(2+) is bound at residue Glu217.

Belongs to the DXR family. It depends on Mg(2+) as a cofactor. Requires Mn(2+) as cofactor.

It catalyses the reaction 2-C-methyl-D-erythritol 4-phosphate + NADP(+) = 1-deoxy-D-xylulose 5-phosphate + NADPH + H(+). Its pathway is isoprenoid biosynthesis; isopentenyl diphosphate biosynthesis via DXP pathway; isopentenyl diphosphate from 1-deoxy-D-xylulose 5-phosphate: step 1/6. In terms of biological role, catalyzes the NADPH-dependent rearrangement and reduction of 1-deoxy-D-xylulose-5-phosphate (DXP) to 2-C-methyl-D-erythritol 4-phosphate (MEP). The chain is 1-deoxy-D-xylulose 5-phosphate reductoisomerase from Lysinibacillus sphaericus (strain C3-41).